We begin with the raw amino-acid sequence, 341 residues long: MSSQLENEASFEATTLGFLWRQFTRPKPLPTGITLAGQVAIVTGSNVGLGFSASRQLLQLGLSHLIMGVRSQAKGDVAAAQLRTDFPFATISVWIVDMESYDSVCAFASRCESLDRIDIVILNAGLIKTPYTVVRATGNEVTLQVNYLSTALLTILLLPILKAKKRVDCSWSPVISIVGSDLMYENEVELEGPVLPQFQQEETFSQFSWYGKSKLLQTMFISKIAEFVNPHDVLVNVSNPGMTGGTDFFRGYPALMMKLIAVGQWILARPVDMAATTYLDAVLVQGEKSHGSFTSDWTIKPYPKIWYTPEGQQLRERLWEETMEELNFVGASKIVNDLKRS.

NADP(+) is bound by residues Leu-49, Lys-74, Asp-97, Asn-123, Tyr-210, and Lys-214. The active-site Proton donor is Tyr-210. Catalysis depends on Lys-214, which acts as the Lowers pKa of active site Tyr.

Belongs to the short-chain dehydrogenases/reductases (SDR) family.

It functions in the pathway secondary metabolite biosynthesis. Short chain dehydrogenase; part of the gene cluster that mediates the biosynthesis of virensols and trichoxide, fungal natural products that contain or are derived from a salicylaldehyde core. The pathway begins with the synthesis of the reduced chain in virensol C by the highly reducing polyketide synthase virA via condensation of one acetate and 8 malonate units. VirA has interesting programming rules since the first 2 ketides are fully reduced, the 3 following ketides undergo beta-dehydration, and the last 3 ketides are only reduced to beta-hydroxys to yield the trihydroxy portion. The production of aldehyde virensol C by virA alone is surprising, since virA does not contain a reductase (R) domain that is typically associated with reductive product release in HRPKS. The cupin-domain enzyme virC is involved in enhancing virA product turnover. The short-chain dehydrogenase virB then oxidizes the C-7 alcohol of virensol C to a ketone, yielding virensol D. Virensol D is further transformed to salicylaldehyde 5-deoxyaurocitrin by the short-chain dehydrogenase virD. VirD catalyzes the dehydrogenation of C-3 to form the beta-ketone aldehyde, which is followed by the generation of the nucleophilic C-2 that is required for the intramolecular aldol condensation between C-2 and C-7, itself followed by dehydration and aromatization which leads to salicylaldehyde 5-deoxyaurocitrin. While the dehydrogenation of virensol D is definitely catalyzed by virD, the aldol condensation and dehydration may be uncatalyzed or assisted by virD. The short chain dehydrogenase virG then converts salicylaldehyde 5-deoxyaurocitrin into virensol B which is further hydroxylated by the cytochrome P450 monooxygenase virE to yield the hydroquinone virensol A. VirI then may oxidize virensol A to form the quinone, while virH performs the epoxidation. Finally, the two remaining short-chain dehydrogenases, virK and virL, are probably responsible for reducing the ketones to the corresponding alcohols to furnish the epoxycyclohexanol structure in trichoxide. This chain is Short chain dehydrogenase virL, found in Hypocrea virens (strain Gv29-8 / FGSC 10586) (Gliocladium virens).